Reading from the N-terminus, the 512-residue chain is ADP,ATP carrier protein 4 (512 aa).

11 helical membrane passes run 34–54 (ISKF…QNLI), 71–91 (ISFL…VIYV), 102–122 (IFYL…YVIF), 157–177 (FSLF…LLFW), 192–212 (FYPL…HFLE), 231–251 (FHTL…IVSI), 296–316 (LIAT…GPWK), 330–350 (AAFI…FVLL), 361–381 (FTSA…FFAV), 390–410 (LIIA…IGAI), and 476–496 (SISI…IWAT).

It belongs to the ADP/ATP translocase tlc family.

It localises to the cell membrane. Its function is as follows. Provides the rickettsial cell with host ATP in exchange for rickettsial ADP. This is an obligate exchange system. This energy acquiring activity is an important component of rickettsial parasitism. This chain is ADP,ATP carrier protein 4 (tlcD), found in Rickettsia prowazekii (strain Madrid E).